A 247-amino-acid polypeptide reads, in one-letter code: Cytochrome c oxidase subunit 2 (247 aa).

A signal peptide spans 1-11 (MFYLLNSIIMN). Topologically, residues 12–38 (DVPTPYGMYFQDSATPNQEGILELHDN) are mitochondrial intermembrane. The helical transmembrane segment at 39–59 (IMFYLFIILGLVSWLLFTIVR) threads the bilayer. Over 60 to 78 (TYSKNPIAYKYIKHGQTIE) the chain is Mitochondrial matrix. Residues 79–101 (IIWTIFPAVILLIIAFPSFILLY) traverse the membrane as a helical segment. The Mitochondrial intermembrane portion of the chain corresponds to 102–247 (LCDEVISPAM…PAFLEWLNEQ (146 aa)). Residues His182, Cys217, Glu219, Cys221, His225, and Met228 each coordinate Cu cation. Mg(2+) is bound at residue Glu219.

The protein belongs to the cytochrome c oxidase subunit 2 family. In terms of assembly, component of the cytochrome c oxidase (complex IV, CIV), a multisubunit enzyme composed of a catalytic core of 3 subunits and several supernumerary subunits. The complex exists as a monomer or a dimer and forms supercomplexes (SCs) in the inner mitochondrial membrane with ubiquinol-cytochrome c oxidoreductase (cytochrome b-c1 complex, complex III, CIII). The cofactor is Cu cation. The signal sequence of COX2 is processed by IMP1.

It is found in the mitochondrion inner membrane. It carries out the reaction 4 Fe(II)-[cytochrome c] + O2 + 8 H(+)(in) = 4 Fe(III)-[cytochrome c] + 2 H2O + 4 H(+)(out). Its function is as follows. Component of the cytochrome c oxidase, the last enzyme in the mitochondrial electron transport chain which drives oxidative phosphorylation. The respiratory chain contains 3 multisubunit complexes succinate dehydrogenase (complex II, CII), ubiquinol-cytochrome c oxidoreductase (cytochrome b-c1 complex, complex III, CIII) and cytochrome c oxidase (complex IV, CIV), that cooperate to transfer electrons derived from NADH and succinate to molecular oxygen, creating an electrochemical gradient over the inner membrane that drives transmembrane transport and the ATP synthase. Cytochrome c oxidase is the component of the respiratory chain that catalyzes the reduction of oxygen to water. Electrons originating from reduced cytochrome c in the intermembrane space (IMS) are transferred via the dinuclear copper A center (CU(A)) of subunit 2 and heme A of subunit 1 to the active site in subunit 1, a binuclear center (BNC) formed by heme A3 and copper B (CU(B)). The BNC reduces molecular oxygen to 2 water molecules using 4 electrons from cytochrome c in the IMS and 4 protons from the mitochondrial matrix. The protein is Cytochrome c oxidase subunit 2 (COX2) of Kluyveromyces lactis (strain ATCC 8585 / CBS 2359 / DSM 70799 / NBRC 1267 / NRRL Y-1140 / WM37) (Yeast).